Consider the following 503-residue polypeptide: Glycerol kinase (503 aa).

ADP is bound at residue Thr14. The ATP site is built by Thr14, Thr15, and Ser16. Thr14 is a sn-glycerol 3-phosphate binding site. Arg18 is a binding site for ADP. Residues Arg84, Glu85, Tyr136, and Asp246 each contribute to the sn-glycerol 3-phosphate site. Residues Arg84, Glu85, Tyr136, Asp246, and Gln247 each contribute to the glycerol site. Residues Thr268 and Gly311 each contribute to the ADP site. ATP-binding residues include Thr268, Gly311, Gln315, and Gly412. Positions 412 and 416 each coordinate ADP.

The protein belongs to the FGGY kinase family.

It carries out the reaction glycerol + ATP = sn-glycerol 3-phosphate + ADP + H(+). It participates in polyol metabolism; glycerol degradation via glycerol kinase pathway; sn-glycerol 3-phosphate from glycerol: step 1/1. With respect to regulation, inhibited by fructose 1,6-bisphosphate (FBP). In terms of biological role, key enzyme in the regulation of glycerol uptake and metabolism. Catalyzes the phosphorylation of glycerol to yield sn-glycerol 3-phosphate. The chain is Glycerol kinase from Haemophilus influenzae (strain PittGG).